Reading from the N-terminus, the 457-residue chain is MTVTVRFAPSPTGYIHIGNTRTALSNWLYASKNNGKFILRYDDTDVERSKDEYAQAIAVDLDWLGVRPDRVEYQSKRFDIYAKAVEKLKTAGLLYACYETADELERRRKLRLARRWPPVYGREALKLTDAEKAALEAEGRKPHWRFLLPNFESDPFATQRTEVHWDDLVRGPQTVDLASMSDPILVREDGTYLYTLPSVVDDIDMGVTHIIRGDDHVTNTGVQISIFKALGATPPVFGHHNLLTTISGEGLSKRTGALSVGSLREAGYEPMAVASLAILIGTSESVTAAPDMAALAEHFDLASISKSSAKFDPSELDALNRSLLHEMPFEKAKPRLEALGICGAKAESFWLAVHGNLDRFSDVSHWWQVVSGDLPEAPDLSGEDRDFVRHAFDLLPPEPWNGQTWKSWTEAVKSATGRKGKNLFMPLRLALTGQAHGPELADLLVLVGLERTKSRRP.

The 'HIGH' region motif lies at 9-19 (PSPTGYIHIGN). The 'KMSKS' region motif lies at 250–254 (GLSKR). Residue Lys253 coordinates ATP.

This sequence belongs to the class-I aminoacyl-tRNA synthetase family. Glutamate--tRNA ligase type 1 subfamily. As to quaternary structure, monomer.

The protein resides in the cytoplasm. It carries out the reaction tRNA(Glu) + L-glutamate + ATP = L-glutamyl-tRNA(Glu) + AMP + diphosphate. Functionally, catalyzes the attachment of glutamate to tRNA(Glu) in a two-step reaction: glutamate is first activated by ATP to form Glu-AMP and then transferred to the acceptor end of tRNA(Glu). The polypeptide is Glutamate--tRNA ligase 2 (Brucella melitensis biotype 1 (strain ATCC 23456 / CCUG 17765 / NCTC 10094 / 16M)).